Consider the following 414-residue polypeptide: MEVEVKAKQAKAAARRMAVLDENTKNLALNHMADALIKDMGKILEANKKDVVEAEKRNIKASLIDRLKLDEKRVEAMAKGLREISALPDPVGSIEKMWKRPNGLQIGKMRVPIGVIGIIYESRPNVTADAAGLCLKSGNAVILRGGSDAINSNIAISSILAKAAYETGIPEGAIQLIENTDREEVNRMMKLNGLIDLIIPRGGASLIKNVIENSTVPVIETGVGNCHIFVDETAKFNIAKDIIVNAKVQRPGVCNAVETVLVHKSIAKEFLPLMVEELTSLGVEIRGCQITKEICPQVKEATDKDWETEYLDLILAVKVVDGIEEALDHISKYSTGHSESIITENYENAMMFLKSVDSAAVYVNASTRFTDGGEFGFGAEIGISTQKMHARGPMGLEELTTYKYVILGSGQIRK.

This sequence belongs to the gamma-glutamyl phosphate reductase family.

The protein resides in the cytoplasm. The catalysed reaction is L-glutamate 5-semialdehyde + phosphate + NADP(+) = L-glutamyl 5-phosphate + NADPH + H(+). It functions in the pathway amino-acid biosynthesis; L-proline biosynthesis; L-glutamate 5-semialdehyde from L-glutamate: step 2/2. In terms of biological role, catalyzes the NADPH-dependent reduction of L-glutamate 5-phosphate into L-glutamate 5-semialdehyde and phosphate. The product spontaneously undergoes cyclization to form 1-pyrroline-5-carboxylate. In Thermoanaerobacter sp. (strain X514), this protein is Gamma-glutamyl phosphate reductase.